A 56-amino-acid polypeptide reads, in one-letter code: uncharacterized protein (56 aa).

This is an uncharacterized protein from Saccharolobus islandicus (Sulfolobus islandicus).